Consider the following 139-residue polypeptide: MAMTYHLDVVSAEQQMFSGLVEKIQVTGSEGELGIYPGHAPLLTAIKPGMIRIVKQHGHEEFIYLSGGILEVQPGSVTVLADTAIRGQDLDEARALEAKRKAEEHIKSSHGDVDYAQASAELAKAIAKLRVIELTKKAM.

This sequence belongs to the ATPase epsilon chain family. As to quaternary structure, F-type ATPases have 2 components, CF(1) - the catalytic core - and CF(0) - the membrane proton channel. CF(1) has five subunits: alpha(3), beta(3), gamma(1), delta(1), epsilon(1). CF(0) has three main subunits: a, b and c.

It localises to the cell inner membrane. In terms of biological role, produces ATP from ADP in the presence of a proton gradient across the membrane. The polypeptide is ATP synthase epsilon chain (Salmonella typhimurium (strain LT2 / SGSC1412 / ATCC 700720)).